The primary structure comprises 160 residues: Putative 4-hydroxy-4-methyl-2-oxoglutarate aldolase (160 aa).

Substrate is bound by residues Gly-78–Ile-81 and Arg-100. Residue Asp-101 participates in a divalent metal cation binding.

Belongs to the class II aldolase/RraA-like family. In terms of assembly, homotrimer. It depends on a divalent metal cation as a cofactor.

The enzyme catalyses 4-hydroxy-4-methyl-2-oxoglutarate = 2 pyruvate. The catalysed reaction is oxaloacetate + H(+) = pyruvate + CO2. Catalyzes the aldol cleavage of 4-hydroxy-4-methyl-2-oxoglutarate (HMG) into 2 molecules of pyruvate. Also contains a secondary oxaloacetate (OAA) decarboxylase activity due to the common pyruvate enolate transition state formed following C-C bond cleavage in the retro-aldol and decarboxylation reactions. This is Putative 4-hydroxy-4-methyl-2-oxoglutarate aldolase from Mycolicibacterium vanbaalenii (strain DSM 7251 / JCM 13017 / BCRC 16820 / KCTC 9966 / NRRL B-24157 / PYR-1) (Mycobacterium vanbaalenii).